A 116-amino-acid chain; its full sequence is Iron-sulfur cluster insertion protein ErpA (116 aa).

3 residues coordinate iron-sulfur cluster: Cys44, Cys108, and Cys110.

The protein belongs to the HesB/IscA family. In terms of assembly, homodimer. The cofactor is iron-sulfur cluster.

Required for insertion of 4Fe-4S clusters for at least IspG. This chain is Iron-sulfur cluster insertion protein ErpA, found in Pseudomonas aeruginosa (strain LESB58).